Here is a 917-residue protein sequence, read N- to C-terminus: Alanine--tRNA ligase (917 aa).

Positions 615, 619, 719, and 723 each coordinate Zn(2+).

Belongs to the class-II aminoacyl-tRNA synthetase family. It depends on Zn(2+) as a cofactor.

Its subcellular location is the cytoplasm. It carries out the reaction tRNA(Ala) + L-alanine + ATP = L-alanyl-tRNA(Ala) + AMP + diphosphate. Its function is as follows. Catalyzes the attachment of alanine to tRNA(Ala) in a two-step reaction: alanine is first activated by ATP to form Ala-AMP and then transferred to the acceptor end of tRNA(Ala). Also edits incorrectly charged Ser-tRNA(Ala) and Gly-tRNA(Ala) via its editing domain. The protein is Alanine--tRNA ligase of Thermococcus kodakarensis (strain ATCC BAA-918 / JCM 12380 / KOD1) (Pyrococcus kodakaraensis (strain KOD1)).